The sequence spans 382 residues: Small ribosomal subunit protein bS1 homolog (382 aa).

S1 motif domains lie at 18–85, 103–168, 189–257, and 274–343; these read GDVV…LSKR, GHVF…LSHK, GDVV…LSIK, and GDIR…LSIK. The residue at position 244 (S244) is a Phosphoserine.

This sequence belongs to the bacterial ribosomal protein bS1 family.

The protein is Small ribosomal subunit protein bS1 homolog of Bacillus cereus (strain ATCC 10987 / NRS 248).